Reading from the N-terminus, the 372-residue chain is Oxidoreductase ptaL (372 aa).

The first 16 residues, 1–16 (MKHIVIIGGGFAGVST), serve as a signal peptide directing secretion. Residues 8 to 12 (GGGFA) and arginine 51 contribute to the 6-hydroxy-FAD site. An N-linked (GlcNAc...) asparagine glycan is attached at asparagine 251. Aspartate 285 serves as a coordination point for 6-hydroxy-FAD.

It belongs to the FAD-dependent oxidoreductase family. It depends on 6-hydroxy-FAD as a cofactor.

Its pathway is secondary metabolite biosynthesis. Oxidoreductase; part of the gene cluster that mediates the biosynthesis of pestheic acid, a diphenyl ether which is a biosynthetic precursor of the unique chloropupukeananes. The biosynthesis initiates from condensation of acetate and malonate units catalyzed by the non-reducing PKS ptaA. As the ptaA protein is TE/CLC domain-deficient, hydrolysis and Claisen cyclization of the polyketide could be catalyzed by ptaB containing a beta-lactamase domain. The ptaB protein might hydrolyze the thioester bond between the ACP of ptaA and the intermediate to release atrochrysone carboxylic acid, which is spontaneously dehydrated to form endocrocin anthrone. Endocrocin anthrone is then converted to endocrocin, catalyzed by the anthrone oxygenase ptaC. Spontaneous decarboxylation of endocrocin occurs to generate emodin. An O-methyltransferase (ptaH or ptaI) could methylate emodin to form physcion. PtaJ could then catalyze the oxidative cleavage of physcion, and rotation of the intermediate could then afford desmethylisosulochrin. PtaF, a putative NADH-dependent oxidoreductase, might also participate in the oxidative cleavage step. Desmethylisosulochrin is then transformed by another O-methyltransferase (ptaH or ptaI) to form isosulochrin. Chlorination of isosulochrin by ptaM in the cyclohexadienone B ring then produces chloroisosulochrin. PtaE is responsible for the oxidative coupling reactions of both benzophenones isosulochrin and chloroisosulochrin to RES-1214-1 and pestheic acid respectively, regardless of chlorination. The sequence is that of Oxidoreductase ptaL from Pestalotiopsis fici (strain W106-1 / CGMCC3.15140).